A 507-amino-acid chain; its full sequence is Histidine ammonia-lyase (507 aa).

The segment at residues 141-143 (ASG) is a cross-link (5-imidazolinone (Ala-Gly)). Residue Ser-142 is modified to 2,3-didehydroalanine (Ser).

The protein belongs to the PAL/histidase family. Post-translationally, contains an active site 4-methylidene-imidazol-5-one (MIO), which is formed autocatalytically by cyclization and dehydration of residues Ala-Ser-Gly.

It is found in the cytoplasm. It carries out the reaction L-histidine = trans-urocanate + NH4(+). It functions in the pathway amino-acid degradation; L-histidine degradation into L-glutamate; N-formimidoyl-L-glutamate from L-histidine: step 1/3. This is Histidine ammonia-lyase from Burkholderia orbicola (strain MC0-3).